We begin with the raw amino-acid sequence, 228 residues long: Mediator of RNA polymerase II transcription subunit 7-B (228 aa).

The protein belongs to the Mediator complex subunit 7 family. As to quaternary structure, component of the Mediator complex.

The protein localises to the nucleus. Functionally, component of the Mediator complex, a coactivator involved in the regulated transcription of nearly all RNA polymerase II-dependent genes. Mediator functions as a bridge to convey information from gene-specific regulatory proteins to the basal RNA polymerase II transcription machinery. Mediator is recruited to promoters by direct interactions with regulatory proteins and serves as a scaffold for the assembly of a functional preinitiation complex with RNA polymerase II and the general transcription factors. This chain is Mediator of RNA polymerase II transcription subunit 7-B (med7-b), found in Xenopus laevis (African clawed frog).